Reading from the N-terminus, the 384-residue chain is 8-amino-7-oxononanoate synthase (384 aa).

Arg-21 contributes to the substrate binding site. 108–109 provides a ligand contact to pyridoxal 5'-phosphate; that stretch reads GF. His-133 contributes to the substrate binding site. Pyridoxal 5'-phosphate is bound by residues Ser-179, His-207, and Thr-233. Lys-236 carries the N6-(pyridoxal phosphate)lysine modification. Thr-352 contacts substrate.

Belongs to the class-II pyridoxal-phosphate-dependent aminotransferase family. BioF subfamily. In terms of assembly, homodimer. Requires pyridoxal 5'-phosphate as cofactor.

It carries out the reaction 6-carboxyhexanoyl-[ACP] + L-alanine + H(+) = (8S)-8-amino-7-oxononanoate + holo-[ACP] + CO2. It participates in cofactor biosynthesis; biotin biosynthesis. Functionally, catalyzes the decarboxylative condensation of pimeloyl-[acyl-carrier protein] and L-alanine to produce 8-amino-7-oxononanoate (AON), [acyl-carrier protein], and carbon dioxide. This chain is 8-amino-7-oxononanoate synthase, found in Escherichia coli (strain K12 / DH10B).